A 327-amino-acid polypeptide reads, in one-letter code: L-lactate dehydrogenase (327 aa).

Residues Val-18, Asp-39, Lys-44, Tyr-69, and Gly-83 to Ala-84 each bind NAD(+). Residues Gln-86, Arg-92, and Asn-124–Asp-127 each bind substrate. NAD(+)-binding positions include Ala-122–Asn-124 and Ser-147. Asp-152 to Arg-155 lines the substrate pocket. The beta-D-fructose 1,6-bisphosphate site is built by Arg-157 and His-172. Catalysis depends on His-179, which acts as the Proton acceptor. Tyr-224 bears the Phosphotyrosine mark. Thr-233 provides a ligand contact to substrate.

The protein belongs to the LDH/MDH superfamily. LDH family. Homotetramer.

It is found in the cytoplasm. It catalyses the reaction (S)-lactate + NAD(+) = pyruvate + NADH + H(+). The protein operates within fermentation; pyruvate fermentation to lactate; (S)-lactate from pyruvate: step 1/1. With respect to regulation, allosterically activated by fructose 1,6-bisphosphate (FBP). Its function is as follows. Catalyzes the conversion of lactate to pyruvate. This Streptococcus equi subsp. equi (strain 4047) protein is L-lactate dehydrogenase.